We begin with the raw amino-acid sequence, 461 residues long: Glutamate--tRNA ligase (461 aa).

The short motif at 8 to 18 (PSPTGYLHIGG) is the 'HIGH' region element. Positions 240-244 (KMSKR) match the 'KMSKS' region motif. Lys-243 contributes to the ATP binding site.

Belongs to the class-I aminoacyl-tRNA synthetase family. Glutamate--tRNA ligase type 1 subfamily. Monomer.

It localises to the cytoplasm. The enzyme catalyses tRNA(Glu) + L-glutamate + ATP = L-glutamyl-tRNA(Glu) + AMP + diphosphate. Functionally, catalyzes the attachment of glutamate to tRNA(Glu) in a two-step reaction: glutamate is first activated by ATP to form Glu-AMP and then transferred to the acceptor end of tRNA(Glu). The sequence is that of Glutamate--tRNA ligase from Chromobacterium violaceum (strain ATCC 12472 / DSM 30191 / JCM 1249 / CCUG 213 / NBRC 12614 / NCIMB 9131 / NCTC 9757 / MK).